Reading from the N-terminus, the 438-residue chain is Probable D-serine dehydratase (438 aa).

Lys114 carries the N6-(pyridoxal phosphate)lysine modification.

It belongs to the serine/threonine dehydratase family. DsdA subfamily. Pyridoxal 5'-phosphate is required as a cofactor.

It catalyses the reaction D-serine = pyruvate + NH4(+). This chain is Probable D-serine dehydratase, found in Histophilus somni (strain 2336) (Haemophilus somnus).